The following is a 451-amino-acid chain: Cyclin-dependent kinase 14 (451 aa).

2 positions are modified to phosphoserine: Ser-60 and Ser-77. The interval 84 to 114 (NFKTSSTGKESPKVRRHSSPSSPTSPKFGKA) is disordered. Residue Ser-116 is modified to Phosphoserine. Positions 117–401 (YEKLEKLGEG…AQAALSHEYF (285 aa)) constitute a Protein kinase domain. ATP-binding positions include 123–131 (LGEGSYATV) and Lys-146. The active-site Proton acceptor is the Asp-238.

It belongs to the protein kinase superfamily. CMGC Ser/Thr protein kinase family. CDC2/CDKX subfamily. As to quaternary structure, found in a complex with LRP6, CCNY and CAPRIN2 during G2/M stage; CAPRIN2 functions as a scaffold for the complex by binding to CCNY via its N terminus and to CDK14 via its C terminus. Interacts with CCNY; CCNY mediates its recruitment to the plasma membrane and promotes phosphorylation of LRP6. Interacts with CCDN3 and CDKN1A. Interacts with SEPT8. Interacts with 14-3-3 proteina YWHAB, YWHAE, YWHAH and YWHAQ.

It is found in the cell membrane. It localises to the cytoplasm. Its subcellular location is the nucleus. The enzyme catalyses L-seryl-[protein] + ATP = O-phospho-L-seryl-[protein] + ADP + H(+). It carries out the reaction L-threonyl-[protein] + ATP = O-phospho-L-threonyl-[protein] + ADP + H(+). With respect to regulation, serine/threonine-protein kinase activity is promoted by associated cyclins CCDN3 and CCNY and repressed by CDKN1A. Serine/threonine-protein kinase involved in the control of the eukaryotic cell cycle, whose activity is controlled by an associated cyclin. Acts as a cell-cycle regulator of Wnt signaling pathway during G2/M phase by mediating the phosphorylation of LRP6 at 'Ser-1490', leading to the activation of the Wnt signaling pathway. Acts as a regulator of cell cycle progression and cell proliferation via its interaction with CCDN3. Phosphorylates RB1 in vitro, however the relevance of such result remains to be confirmed in vivo. May also play a role in meiosis, neuron differentiation and may indirectly act as a negative regulator of insulin-responsive glucose transport. The polypeptide is Cyclin-dependent kinase 14 (CDK14) (Plecturocebus moloch (Dusky titi monkey)).